A 274-amino-acid polypeptide reads, in one-letter code: Speedy protein C (274 aa).

The segment at 37 to 169 (HQEVQAFLSL…FHWAWTRDRR (133 aa)) is speedy/Ringo box; Required for CDK-binding.

The protein belongs to the Speedy/Ringo family. In terms of assembly, interacts with CDK1 and CDK2. Interacts with AURKB. Expressed in a variety of tissues including bone marrow, kidney, small intestine, liver, placenta and testis.

It localises to the cytoplasm. Functionally, promotes progression through the cell cycle via binding and activation of CDK1 and CDK2. Involved in the spindle-assembly checkpoint. Required for recruitment of MAD2L1, BUBR1 and BUB1 to kinetochores. Required for the correct localization of the active form of Aurora B in prometaphase. This Homo sapiens (Human) protein is Speedy protein C.